A 74-amino-acid polypeptide reads, in one-letter code: NADH dehydrogenase [ubiquinone] 1 alpha subcomplex assembly factor 8 (74 aa).

The CHCH domain occupies 22–69; sequence LAACGAEASAYGKCVQASTAPGGRLSKDLCVREFEALRSCFAAAAKKT. 2 short sequence motifs (cx9C motif) span residues 25 to 35 and 51 to 61; these read CGAEASAYGKC and CVREFEALRSC. 2 cysteine pairs are disulfide-bonded: Cys-25–Cys-61 and Cys-35–Cys-51.

Interacts with NDUFAF5.

Its subcellular location is the mitochondrion. Functionally, involved in the assembly of mitochondrial NADH:ubiquinone oxidoreductase complex (complex I, MT-ND1). Required to stabilize NDUFAF5. The polypeptide is NADH dehydrogenase [ubiquinone] 1 alpha subcomplex assembly factor 8 (Mus musculus (Mouse)).